A 523-amino-acid polypeptide reads, in one-letter code: Light-independent protochlorophyllide reductase subunit B (523 aa).

D36 serves as a coordination point for [4Fe-4S] cluster. Residue D290 is the Proton donor of the active site. Position 425–426 (425–426 (GL)) interacts with substrate.

The protein belongs to the ChlB/BchB/BchZ family. In terms of assembly, protochlorophyllide reductase is composed of three subunits; ChlL, ChlN and ChlB. Forms a heterotetramer of two ChlB and two ChlN subunits. The cofactor is [4Fe-4S] cluster.

The catalysed reaction is chlorophyllide a + oxidized 2[4Fe-4S]-[ferredoxin] + 2 ADP + 2 phosphate = protochlorophyllide a + reduced 2[4Fe-4S]-[ferredoxin] + 2 ATP + 2 H2O. The protein operates within porphyrin-containing compound metabolism; chlorophyll biosynthesis (light-independent). Its function is as follows. Component of the dark-operative protochlorophyllide reductase (DPOR) that uses Mg-ATP and reduced ferredoxin to reduce ring D of protochlorophyllide (Pchlide) to form chlorophyllide a (Chlide). This reaction is light-independent. The NB-protein (ChlN-ChlB) is the catalytic component of the complex. The protein is Light-independent protochlorophyllide reductase subunit B of Prochlorococcus marinus (strain MIT 9301).